We begin with the raw amino-acid sequence, 109 residues long: UPF0482 protein ESA_01750 (109 aa).

The N-terminal stretch at 1–24 is a signal peptide; the sequence is MNKFLRHSLLLALLTGALSGVANA. The segment covering 38–55 has biased composition (basic and acidic residues); it reads RTRQDAAMDKEQWNDTRS. The disordered stretch occupies residues 38–63; it reads RTRQDAAMDKEQWNDTRSLRQKVNKR.

The protein belongs to the UPF0482 family.

The polypeptide is UPF0482 protein ESA_01750 (Cronobacter sakazakii (strain ATCC BAA-894) (Enterobacter sakazakii)).